We begin with the raw amino-acid sequence, 116 residues long: U16-barytoxin-Tl1c (116 aa).

The first 20 residues, Met1 to Ala20, serve as a signal peptide directing secretion. Residues Asn21–Asn76 constitute a propeptide that is removed on maturation. 3 cysteine pairs are disulfide-bonded: Cys75–Cys90, Cys82–Cys95, and Cys89–Cys110.

Belongs to the neurotoxin 14 (magi-1) family. 06 (ICK-Trit) subfamily. As to expression, expressed by the venom gland.

Its subcellular location is the secreted. In terms of biological role, ion channel inhibitor. The polypeptide is U16-barytoxin-Tl1c (Trittame loki (Brush-footed trapdoor spider)).